We begin with the raw amino-acid sequence, 590 residues long: Ankyrin repeat domain-containing protein 13A (590 aa).

ANK repeat units lie at residues 40–69 and 73–102; these read RGRTLLHLAVSLGHLESARVLLRHKADVTK and QGWTVLHEAVSTGDPEMVYTVLQHRDYHNT. Ser-205 carries the phosphoserine modification. UIM domains follow at residues 483 to 502, 519 to 538, 549 to 568, and 574 to 590; these read EDYEIMQFAIQQSLLESSRS, TYDAQYERAIQESLLTSTEG, RFDNDLQLAMELSAKELEEW, and EEEAELQQVLQLSLTDK. A Phosphoserine modification is found at Ser-586.

As to quaternary structure, interacts (via the UIM 3 and 4 repeats) with EGFR (ubiquitinated); the interaction is direct, inhibited by ANKRD13A monoubiquitination and may regulate EGFR internalization. Monoubiquitinated, inhibits interaction with ubiquitinated EGFR.

Its subcellular location is the cell membrane. The protein resides in the late endosome. Its function is as follows. Ubiquitin-binding protein that specifically recognizes and binds 'Lys-63'-linked ubiquitin. Does not bind 'Lys-48'-linked ubiquitin. Positively regulates the internalization of ligand-activated EGFR by binding to the Ub moiety of ubiquitinated EGFR at the cell membrane. This is Ankyrin repeat domain-containing protein 13A (ANKRD13A) from Homo sapiens (Human).